The primary structure comprises 95 residues: Membrane protein insertion and folding monitor (95 aa).

The helical transmembrane segment at 12-32 (LFLVDFFTIILPALTAIGIAF) threads the bilayer. The tract at residues 86 to 89 (DEED) is crucial for elongation arrest.

The protein localises to the cell membrane. Its function is as follows. Sensor protein that up-regulates translation of the secondary membrane protein insertase (MisCB/YqjG) when activity of the primary membrane protein insertase (MisCA/SpoIIIJ) is limited. Acts as a ribosome-nascent chain complex. When the primary membrane protein insertase activity or level is reduced, the membrane insertion of MifM is impaired, which induces arrest of MifM translation and unfolding of the mRNA hairpin. Unfolding leads to translation of the downstream gene, which encodes the secondary membrane protein insertase MisCB/YqjG. Translation arrest of MifM is mediated by interaction of its C-terminal domain with the ribosomal polypeptide exit tunnel. Undergoes multisite stalling, which may allow a sufficient duration of ribosomal stalling and consequently sufficient levels of MisCB/YqjG. The protein is Membrane protein insertion and folding monitor (mifM) of Bacillus subtilis (strain 168).